We begin with the raw amino-acid sequence, 539 residues long: Sorting nexin-27 (539 aa).

The interval methionine 1–arginine 40 is disordered. Residues asparagine 17–proline 39 are compositionally biased toward gly residues. A PDZ domain is found at valine 41 to proline 134. 2 positions are modified to phosphoserine: serine 49 and serine 60. The PX domain maps to glutamine 159 to tyrosine 267. Residues serine 271–phenylalanine 360 form the Ras-associating domain. The tract at residues serine 271–phenylalanine 360 is FERM-like region F1. Residues asparagine 371–cysteine 419 are FERM-like region F2. The interval asparagine 423–lysine 523 is FERM-like region F3.

In terms of assembly, core component of the SNX27-retromer, a multiprotein complex composed of SNX27, the WASH complex and the retromer complex. Interacts (via PDZ domain) with a number of target transmembrane proteins (via PDZ-binding motif): ABCC4, ADRB2, ARHGEF7, GRIA1, GRIA2, GRIN1, GRIN2A GRIN2C, KCNJ6, KCNJ9 and SLC2A1/GLUT1. Interacts (via the FERM-like regions) with the WASH complex. Interacts with SNX1. Interacts with CYTIP. Interacts with DGKZ. Interacts with MCC. Interacts (via PDZ domains) with SLC9A3; directs SLC9A3 membrane insertion from early endosomes to the plasma membrane. As to expression, isoform 1 is predominantly expressed in the testis, whereas isoform 2 is predominant in various brain regions, including, neocortex, paleocortex, striatum, hippocampus, cerebellum and brain stem. Expressed in cells of hematopoietic origin.

The protein resides in the early endosome membrane. The protein localises to the cytoplasm. It is found in the cytosol. Functionally, involved in the retrograde transport from endosome to plasma membrane, a trafficking pathway that promotes the recycling of internalized transmembrane proteins. Following internalization, endocytosed transmembrane proteins are delivered to early endosomes and recycled to the plasma membrane instead of being degraded in lysosomes. SNX27 specifically binds and directs sorting of a subset of transmembrane proteins containing a PDZ-binding motif at the C-terminus: following interaction with target transmembrane proteins, associates with the retromer complex, preventing entry into the lysosomal pathway, and promotes retromer-tubule based plasma membrane recycling. SNX27 also binds with the WASH complex. Interacts with membranes containing phosphatidylinositol-3-phosphate (PtdIns(3P)). May participate in establishment of natural killer cell polarity. Recruits CYTIP to early endosomes. The protein is Sorting nexin-27 (Snx27) of Rattus norvegicus (Rat).